Consider the following 186-residue polypeptide: Ribosome-recycling factor (186 aa).

Positions aspartate 135–methionine 164 are disordered.

Belongs to the RRF family.

Its subcellular location is the cytoplasm. Responsible for the release of ribosomes from messenger RNA at the termination of protein biosynthesis. May increase the efficiency of translation by recycling ribosomes from one round of translation to another. The polypeptide is Ribosome-recycling factor (Sinorhizobium medicae (strain WSM419) (Ensifer medicae)).